We begin with the raw amino-acid sequence, 87 residues long: Probable Fe(2+)-trafficking protein (87 aa).

The protein belongs to the Fe(2+)-trafficking protein family.

Could be a mediator in iron transactions between iron acquisition and iron-requiring processes, such as synthesis and/or repair of Fe-S clusters in biosynthetic enzymes. The sequence is that of Probable Fe(2+)-trafficking protein from Francisella philomiragia subsp. philomiragia (strain ATCC 25017 / CCUG 19701 / FSC 153 / O#319-036).